Here is a 104-residue protein sequence, read N- to C-terminus: uncharacterized protein (104 aa).

A coiled-coil region spans residues 24–69; the sequence is VIKQIIEKYNDKVKELDTLKNQYQNLQQDYENLKQQVSLQRQTMIS.

This is an uncharacterized protein from Acanthamoeba polyphaga mimivirus (APMV).